Here is a 221-residue protein sequence, read N- to C-terminus: uncharacterized protein (221 aa).

Residues 1-45 (MYAPIRSPITELNESTPSSIPVATSYATCSASFAKLVALLVDDMA) are Extracellular-facing. Residues 46–66 (GLSIVLSEIYIYFKLLFLIVI) traverse the membrane as a helical segment. Over 67–221 (TESIQNKLED…KYIVVIKVEQ (155 aa)) the chain is Cytoplasmic.

It is found in the host membrane. This is an uncharacterized protein from Acidianus filamentous virus 1 (isolate United States/Yellowstone) (AFV-1).